The sequence spans 241 residues: Sugar fermentation stimulation protein homolog (241 aa).

This sequence belongs to the SfsA family.

This chain is Sugar fermentation stimulation protein homolog, found in Hahella chejuensis (strain KCTC 2396).